We begin with the raw amino-acid sequence, 336 residues long: Fructose-1,6-bisphosphatase class 1 (336 aa).

Mg(2+)-binding residues include E90, D112, L114, and D115. Substrate-binding positions include 115 to 118 (DGSS), N207, and K273. E279 is a Mg(2+) binding site.

It belongs to the FBPase class 1 family. As to quaternary structure, homotetramer. Mg(2+) is required as a cofactor.

The protein localises to the cytoplasm. It carries out the reaction beta-D-fructose 1,6-bisphosphate + H2O = beta-D-fructose 6-phosphate + phosphate. It functions in the pathway carbohydrate biosynthesis; gluconeogenesis. The protein is Fructose-1,6-bisphosphatase class 1 of Xanthomonas euvesicatoria pv. vesicatoria (strain 85-10) (Xanthomonas campestris pv. vesicatoria).